Here is a 691-residue protein sequence, read N- to C-terminus: DNA ligase (691 aa).

The segment at 1–22 (MTTAEDVAGNPYISDPRTDFES) is disordered. NAD(+) is bound by residues 59-63 (DRAYD), 107-108 (SI), and E137. The N6-AMP-lysine intermediate role is filled by K139. Residues R160, E196, K311, and K335 each coordinate NAD(+). 4 residues coordinate Zn(2+): C426, C429, C442, and C448. The region spanning 608 to 691 (TDGDALDGQT…EELLDDAGVL (84 aa)) is the BRCT domain. Residues 637–667 (ERNDGSATSSVSGNTDYLVLGDNPGQRKQDD) form a disordered region. A compositionally biased stretch (polar residues) spans 641-651 (GSATSSVSGNT).

This sequence belongs to the NAD-dependent DNA ligase family. LigA subfamily. Mg(2+) is required as a cofactor. Mn(2+) serves as cofactor.

It carries out the reaction NAD(+) + (deoxyribonucleotide)n-3'-hydroxyl + 5'-phospho-(deoxyribonucleotide)m = (deoxyribonucleotide)n+m + AMP + beta-nicotinamide D-nucleotide.. Functionally, DNA ligase that catalyzes the formation of phosphodiester linkages between 5'-phosphoryl and 3'-hydroxyl groups in double-stranded DNA using NAD as a coenzyme and as the energy source for the reaction. It is essential for DNA replication and repair of damaged DNA. The chain is DNA ligase from Haloarcula marismortui (strain ATCC 43049 / DSM 3752 / JCM 8966 / VKM B-1809) (Halobacterium marismortui).